The chain runs to 92 residues: Small cysteine and glycine repeat-containing protein 9 (92 aa).

The segment at cysteine 4–glycine 72 is 11 X 2 AA repeats of CG.

It belongs to the KRTAP type 28 family.

In the hair cortex, hair keratin intermediate filaments are embedded in an interfilamentous matrix, consisting of hair keratin-associated proteins (KRTAP), which are essential for the formation of a rigid and resistant hair shaft through their extensive disulfide bond cross-linking with abundant cysteine residues of hair keratins. The matrix proteins include the high-sulfur and high-glycine-tyrosine keratins. This Homo sapiens (Human) protein is Small cysteine and glycine repeat-containing protein 9.